The following is a 483-amino-acid chain: GTPase Der (483 aa).

EngA-type G domains lie at 3-167 and 212-387; these read FTLA…GEER and LRIA…EIWN. Residues 9–16, 56–60, 119–122, 218–225, 265–269, and 330–333 contribute to the GTP site; these read GRPNVGKS, DTAGL, NKAE, GRPNAGKS, DTAGM, and NKWD. In terms of domain architecture, KH-like spans 388–472; the sequence is RRISTGRLNR…PIRLSLRTSD (85 aa).

This sequence belongs to the TRAFAC class TrmE-Era-EngA-EngB-Septin-like GTPase superfamily. EngA (Der) GTPase family. As to quaternary structure, associates with the 50S ribosomal subunit.

Functionally, GTPase that plays an essential role in the late steps of ribosome biogenesis. In Brucella suis (strain ATCC 23445 / NCTC 10510), this protein is GTPase Der.